The following is a 104-amino-acid chain: Thioredoxin (104 aa).

In terms of domain architecture, Thioredoxin spans 2 to 104; the sequence is AIVKATDQSF…ALQELVNKHL (103 aa). An intrachain disulfide couples cysteine 29 to cysteine 32.

This sequence belongs to the thioredoxin family.

In terms of biological role, participates in various redox reactions through the reversible oxidation of its active center dithiol to a disulfide and catalyzes dithiol-disulfide exchange reactions. This Bacillus subtilis (strain 168) protein is Thioredoxin (trxA).